The primary structure comprises 244 residues: Glutathione-independent glyoxalase hsp3101 (244 aa).

Catalysis depends on residues C139, H140, and E173.

Belongs to the peptidase C56 family. HSP31-like subfamily.

Its subcellular location is the cytoplasm. The protein localises to the nucleus. It catalyses the reaction methylglyoxal + H2O = (R)-lactate + H(+). In terms of biological role, catalyzes the conversion of methylglyoxal (MG) to D-lactate in a single glutathione (GSH)-independent step. May play a role in detoxifying endogenously produced glyoxals. Involved in protection against reactive oxygen species (ROS). The sequence is that of Glutathione-independent glyoxalase hsp3101 from Schizosaccharomyces pombe (strain 972 / ATCC 24843) (Fission yeast).